A 63-amino-acid polypeptide reads, in one-letter code: Large ribosomal subunit protein bL32 (63 aa).

The interval 1–45 (MAVQQNKKSRSRRDMRRSHDALTKPTLSVDPTTGETHLRHHMTPD) is disordered. Over residues 7–16 (KKSRSRRDMR) the composition is skewed to basic residues. Positions 25-35 (PTLSVDPTTGE) are enriched in polar residues.

Belongs to the bacterial ribosomal protein bL32 family.

The sequence is that of Large ribosomal subunit protein bL32 from Legionella pneumophila (strain Paris).